A 311-amino-acid polypeptide reads, in one-letter code: Mitochondrial ribosome-associated GTPase 1 (311 aa).

The CP-type G domain maps to 27 to 200 (AKGLKQMKTK…LFDTPGVLSP (174 aa)). Residues 74 to 77 (NKMD), 144 to 149 (NVGKSS), and Gly-196 contribute to the GTP site.

It belongs to the TRAFAC class YlqF/YawG GTPase family. MTG1 subfamily.

The protein resides in the mitochondrion inner membrane. Plays a role in the regulation of the mitochondrial ribosome assembly and of translational activity. Displays mitochondrial GTPase activity. The chain is Mitochondrial ribosome-associated GTPase 1 from Xenopus tropicalis (Western clawed frog).